A 2541-amino-acid polypeptide reads, in one-letter code: Talin-1 (2541 aa).

The FERM domain maps to 86–403 (RPLKIRMLDG…GYIDIILKKK (318 aa)). Thr-167 carries the post-translational modification Phosphothreonine. Residues 280–435 (FQAHKNCGQM…PKKSTVLQQQ (156 aa)) are interaction with LAYN. 5 positions are modified to phosphoserine: Ser-405, Ser-425, Ser-446, Ser-620, and Ser-729. The interval 482 to 655 (RGHMPPLTSA…QASGELLQQI (174 aa)) is helical bundle R1. Positions 656-786 (GESDTDPHFQ…ALNELLQHVK (131 aa)) are helical bundle R2. A helical bundle R3 region spans residues 787–911 (AHATGAGPAG…NAAAQNAIKK (125 aa)). Positions 913-1044 (LVQRLEHAAK…RTAAQKAQEA (132 aa)) are helical bundle R4. The residue at position 1021 (Ser-1021) is a Phosphoserine. Positions 1046-1206 (GPLEMDSALS…NRCVSCLPGQ (161 aa)) are helical bundle R5. A Phosphotyrosine modification is found at Tyr-1116. Thr-1142 carries the phosphothreonine modification. Ser-1201 and Ser-1225 each carry phosphoserine. Positions 1207–1357 (RDVDNALRAV…QLITMCTQQA (151 aa)) are helical bundle R6. Thr-1263 carries the phosphothreonine modification. Ser-1323 is modified (phosphoserine). Residues 1327-1948 (AAPNLKSQLA…CSPSDAYTKK (622 aa)) form an interaction with SYNM region. A helical bundle R7A region spans residues 1358-1453 (PGQKECDNAL…AYLVGVSDPN (96 aa)). The segment at 1359–1659 (GQKECDNALR…SMRDKAPGQL (301 aa)) is interaction with VCL and F-actin. Residues 1461–1580 (LVEPTQFARA…NLSAFASNPE (120 aa)) are helical bundle R8. An N6-acetyllysine modification is found at Lys-1544. The interval 1581 to 1653 (FSSIPAQISP…IKKLITSMRD (73 aa)) is helical bundle R7B. The interval 1655–1822 (APGQLECETA…TLNEAASAAG (168 aa)) is helical bundle R9. Residues 1823–1973 (VVGGMVDSIT…VLAALQAGNR (151 aa)) are helical bundle R10. Ser-1849 bears the Phosphoserine mark. Thr-1855 bears the Phosphothreonine mark. The residue at position 1878 (Ser-1878) is a Phosphoserine. The helical bundle R11 stretch occupies residues 1974–2140 (GTQACITAAS…TVKAVEDEAT (167 aa)). Position 2031 is an N6-acetyllysine (Lys-2031). Ser-2040 carries the post-translational modification Phosphoserine. N6-acetyllysine is present on Lys-2115. Residues 2141 to 2294 (KGTRALEATT…QAAEAMKGTE (154 aa)) are helical bundle R12. Positions 2293–2533 (TEWVDPEDPT…QIRQQQYKFL (241 aa)) constitute an I/LWEQ domain. The helical bundle R13 stretch occupies residues 2300–2482 (DPTVIAENEL…AAQKAAAFEE (183 aa)).

Part of a complex composed of THSD1, PTK2/FAK1, TLN1 and VCL. Interacts with THSD1; this promotes interaction with PTK2/FAK1 and VCL. Binds with high affinity to VCL and with low affinity to integrins. Interacts with APBB1IP; this inhibits VCL binding. Interacts with PTK2/FAK1. Interacts with PIP5K1C and NRAP. Interacts with LAYN. Interacts with SYNM. Interacts with ITGB1; the interaction is prevented by competitive binding of ITGB1BP1. Interacts with SVEP1. Interacts (via R7 domain) with KANK1 or KANK2 (via KN motif); this interaction likely initiates the assembly of cortical microtubule stabilization complexes (CMSCs) at the vicinity of focal adhesions. In terms of assembly, interacts with VCL; shows reduced VCL binding compared to isoform 2. Interacts with APBB1IP; shows similar level of binding compared to isoform 2. As to quaternary structure, interacts with VCL; shows enhanced VCL binding compared to isoform 1. Interacts with APBB1IP; shows similar level of binding compared to isoform 1. (Microbial infection) Interacts with human cytomegalovirus protein UL135. Expressed at low to non-detectable levels in many tissues but highly expressed in skin and pancreas with other tissues including kidney cortex, endocervix, testis, pituitary, liver, and spleen also showing robust expression.

The protein resides in the cell projection. The protein localises to the ruffle membrane. It localises to the cytoplasm. Its subcellular location is the cytoskeleton. It is found in the cell surface. The protein resides in the cell junction. The protein localises to the focal adhesion. Its function is as follows. High molecular weight cytoskeletal protein concentrated at regions of cell-matrix and cell-cell contacts. Involved in connections of major cytoskeletal structures to the plasma membrane. With KANK1 co-organize the assembly of cortical microtubule stabilizing complexes (CMSCs) positioned to control microtubule-actin crosstalk at focal adhesions (FAs) rims. This chain is Talin-1 (TLN1), found in Homo sapiens (Human).